The following is a 114-amino-acid chain: Chaperone protein YscY (114 aa).

As to quaternary structure, binds to YscX.

The protein localises to the cytoplasm. Required for Yop secretion. Functions probably as a chaperone which stabilizes YscX within the cell, before its secretion. This chain is Chaperone protein YscY (yscY), found in Yersinia enterocolitica serotype O:8 / biotype 1B (strain NCTC 13174 / 8081).